Reading from the N-terminus, the 190-residue chain is Xanthine phosphoribosyltransferase (190 aa).

2 residues coordinate xanthine: leucine 20 and asparagine 27. Residue alanine 129–alanine 133 participates in 5-phospho-alpha-D-ribose 1-diphosphate binding. Lysine 157 is a binding site for xanthine.

Belongs to the purine/pyrimidine phosphoribosyltransferase family. Xpt subfamily. Homodimer.

It is found in the cytoplasm. It carries out the reaction XMP + diphosphate = xanthine + 5-phospho-alpha-D-ribose 1-diphosphate. It functions in the pathway purine metabolism; XMP biosynthesis via salvage pathway; XMP from xanthine: step 1/1. Converts the preformed base xanthine, a product of nucleic acid breakdown, to xanthosine 5'-monophosphate (XMP), so it can be reused for RNA or DNA synthesis. This chain is Xanthine phosphoribosyltransferase, found in Laribacter hongkongensis (strain HLHK9).